We begin with the raw amino-acid sequence, 419 residues long: Tyrosine--tRNA ligase (419 aa).

Tyr34 contacts L-tyrosine. A 'HIGH' region motif is present at residues Pro39–His48. L-tyrosine contacts are provided by Tyr168 and Gln172. A 'KMSKS' region motif is present at residues Lys230–Ser234. Residue Lys233 participates in ATP binding. The S4 RNA-binding domain occupies Ala352–Tyr418.

It belongs to the class-I aminoacyl-tRNA synthetase family. TyrS type 1 subfamily. In terms of assembly, homodimer.

The protein resides in the cytoplasm. The catalysed reaction is tRNA(Tyr) + L-tyrosine + ATP = L-tyrosyl-tRNA(Tyr) + AMP + diphosphate + H(+). Functionally, catalyzes the attachment of tyrosine to tRNA(Tyr) in a two-step reaction: tyrosine is first activated by ATP to form Tyr-AMP and then transferred to the acceptor end of tRNA(Tyr). This Listeria monocytogenes serovar 1/2a (strain ATCC BAA-679 / EGD-e) protein is Tyrosine--tRNA ligase.